The chain runs to 105 residues: Urease subunit beta (105 aa).

This sequence belongs to the urease beta subunit family. In terms of assembly, heterotrimer of UreA (gamma), UreB (beta) and UreC (alpha) subunits. Three heterotrimers associate to form the active enzyme.

It localises to the cytoplasm. The enzyme catalyses urea + 2 H2O + H(+) = hydrogencarbonate + 2 NH4(+). Its pathway is nitrogen metabolism; urea degradation; CO(2) and NH(3) from urea (urease route): step 1/1. The polypeptide is Urease subunit beta (Mycobacterium sp. (strain JLS)).